Here is a 535-residue protein sequence, read N- to C-terminus: UDP-glucuronosyltransferase 1A1 (535 aa).

A signal peptide spans 1 to 29; the sequence is MSVVCRSSCSLLLLPCLLLCVLGPSASHA. N-linked (GlcNAc...) asparagine glycosylation is found at N89, N297, and N435. The helical transmembrane segment at 493 to 509 threads the bilayer; that stretch reads VIGFLLAIVLTVVFIVY.

This sequence belongs to the UDP-glycosyltransferase family. As to quaternary structure, homodimers. Homooligomer. Interacts with UGT1A3, UGT1A4, UGT1A6, UGT1A7, UGT1A8, UGT1A9 and UGT1A10 to form heterodimers.

The protein resides in the endoplasmic reticulum membrane. It carries out the reaction glucuronate acceptor + UDP-alpha-D-glucuronate = acceptor beta-D-glucuronoside + UDP + H(+). The catalysed reaction is 17beta-estradiol + UDP-alpha-D-glucuronate = 17beta-estradiol 3-O-(beta-D-glucuronate) + UDP + H(+). The enzyme catalyses 2-hydroxyestrone + UDP-alpha-D-glucuronate = 2-hydroxyestrone 3-O-(beta-D-glucuronate) + UDP + H(+). It catalyses the reaction 2-hydroxy-17beta-estradiol + UDP-alpha-D-glucuronate = 2-hydroxy-17beta-estradiol 3-O-(beta-D-glucuronate) + UDP + H(+). It carries out the reaction 2-methoxy-17beta-estradiol + UDP-alpha-D-glucuronate = 2-methoxy-17beta-estradiol 3-O-(beta-D-glucuronate) + UDP + H(+). The catalysed reaction is 17alpha-estradiol + UDP-alpha-D-glucuronate = 17alpha-estradiol 3-O-(beta-D-glucuronate) + UDP + H(+). The enzyme catalyses 16beta,17beta-estriol + UDP-alpha-D-glucuronate = 16beta,17beta-estriol 16-O-(beta-D-glucuronate) + UDP + H(+). It catalyses the reaction losartan + UDP-alpha-D-glucuronate = losartan-2-N-beta-D-glucuronide + UDP. It carries out the reaction prunetin + UDP-alpha-D-glucuronate = prunetin-4'-O-beta-D-glucuronide + UDP. The catalysed reaction is SN-38 + UDP-alpha-D-glucuronate = SN-38 O-beta-D-glucuronide + UDP + H(+). The enzyme catalyses (4Z,15Z)-bilirubin IXalpha + UDP-alpha-D-glucuronate = (4Z,15Z)-bilirubin IXalpha C12-beta-D-glucuronoside + UDP. It catalyses the reaction (4Z,15Z)-bilirubin IXalpha + UDP-alpha-D-glucuronate = (4Z,15Z)-bilirubin IXalpha C8-beta-D-glucuronoside + UDP. It carries out the reaction (4Z,15Z)-bilirubin IXalpha C8-beta-D-glucuronoside + UDP-alpha-D-glucuronate = (4Z,15Z)-bilirubin IXalpha C8,C12-beta-D-bisglucuronoside + UDP. The catalysed reaction is (4Z,15Z)-bilirubin IXalpha C12-beta-D-glucuronoside + UDP-alpha-D-glucuronate = (4Z,15Z)-bilirubin IXalpha C8,C12-beta-D-bisglucuronoside + UDP. The enzyme catalyses 8-iso-prostaglandin F2alpha + UDP-alpha-D-glucuronate = 8-iso-prostaglandin F2alpha-glucuronide + UDP + H(+). It catalyses the reaction (5Z,8Z,11Z,14Z)-eicosatetraenoate + UDP-alpha-D-glucuronate = O-[(5Z),(8Z),(11Z),(14Z)-eicosatetraenoyl]-beta-D-glucuronate + UDP. It carries out the reaction 15-hydroxy-(5Z,8Z,11Z,13E)-eicosatetraenoate + UDP-alpha-D-glucuronate = 15-O-(beta-D-glucuronosyl)-(5Z,8Z,11Z,14Z)-eicosatetraenoate + UDP + H(+). The catalysed reaction is 20-hydroxy-(5Z,8Z,11Z,14Z)-eicosatetraenoate + UDP-alpha-D-glucuronate = 20-O-(beta-D-glucuronosyl)-(5Z,8Z,11Z,14Z)-eicosatetraenoate + UDP + H(+). The enzyme catalyses prostaglandin B1 + UDP-alpha-D-glucuronate = 15-O-(beta-D-glucuronosyl)-prostaglandin B1 + UDP + H(+). It catalyses the reaction (E)-ferulate + UDP-alpha-D-glucuronate = (E)-4-O-(beta-D-glucuronosyl)-ferulate + UDP + H(+). It carries out the reaction (E)-ferulate + UDP-alpha-D-glucuronate = (E)-ferulic acid beta-D-glucuronate ester + UDP. Its function is as follows. UDP-glucuronosyltransferase (UGT) that catalyzes phase II biotransformation reactions in which lipophilic substrates are conjugated with glucuronic acid to increase the metabolite's water solubility, thereby facilitating excretion into either the urine or bile. Essential for the elimination and detoxification of drugs, xenobiotics and endogenous compounds. Catalyzes the glucuronidation of endogenous estrogen hormones such as estradiol, estrone and estriol. Involved in the glucuronidation of bilirubin, a degradation product occurring in the normal catabolic pathway that breaks down heme in vertebrates. Involved in the glucuronidation of arachidonic acid (AA) and AA-derived eicosanoids including 15-HETE, 20-HETE, PGB1 and F2-isoprostane (8-iso-PGF2alpha). Involved in the glucuronidation of the phytochemical ferulic acid at the phenolic or the carboxylic acid group. Also catalyzes the glucuronidation the isoflavones genistein, daidzein, glycitein, formononetin, biochanin A and prunetin, which are phytoestrogens with anticancer and cardiovascular properties. Involved in the glucuronidation of the AGTR1 angiotensin receptor antagonist losartan, a drug which can inhibit the effect of angiotensin II. Involved in the biotransformation of 7-ethyl-10-hydroxycamptothecin (SN-38), the pharmacologically active metabolite of the anticancer drug irinotecan. In Rattus norvegicus (Rat), this protein is UDP-glucuronosyltransferase 1A1.